Reading from the N-terminus, the 403-residue chain is Dual-specificity RNA methyltransferase RlmN (403 aa).

Residues 1–25 (MTKIPMQPADSTPATFHPNAPTKTN) form a disordered region. Glu112 (proton acceptor) is an active-site residue. Positions 123–364 (VNGRKTLCIS…VCTIRQTRGD (242 aa)) constitute a Radical SAM core domain. Cys130 and Cys370 are joined by a disulfide. The [4Fe-4S] cluster site is built by Cys137, Cys141, and Cys144. S-adenosyl-L-methionine is bound by residues 193–194 (GE), Ser225, 247–249 (SLH), and Asn327. Cys370 functions as the S-methylcysteine intermediate in the catalytic mechanism.

This sequence belongs to the radical SAM superfamily. RlmN family. The cofactor is [4Fe-4S] cluster.

The protein localises to the cytoplasm. The catalysed reaction is adenosine(2503) in 23S rRNA + 2 reduced [2Fe-2S]-[ferredoxin] + 2 S-adenosyl-L-methionine = 2-methyladenosine(2503) in 23S rRNA + 5'-deoxyadenosine + L-methionine + 2 oxidized [2Fe-2S]-[ferredoxin] + S-adenosyl-L-homocysteine. The enzyme catalyses adenosine(37) in tRNA + 2 reduced [2Fe-2S]-[ferredoxin] + 2 S-adenosyl-L-methionine = 2-methyladenosine(37) in tRNA + 5'-deoxyadenosine + L-methionine + 2 oxidized [2Fe-2S]-[ferredoxin] + S-adenosyl-L-homocysteine. Specifically methylates position 2 of adenine 2503 in 23S rRNA and position 2 of adenine 37 in tRNAs. m2A2503 modification seems to play a crucial role in the proofreading step occurring at the peptidyl transferase center and thus would serve to optimize ribosomal fidelity. The chain is Dual-specificity RNA methyltransferase RlmN from Psychrobacter sp. (strain PRwf-1).